The following is a 227-amino-acid chain: MLIHIPSVLTVEEVAHCRQIMAGAEWVDGRVTAGPQSAMVKNNLQIPLSSDAHREMRDIVLRALGRNPTYNSAALPLRVVPPLFNRYDAGMSFAAHVDNAIRPIHETGARVRTDLSSTLFLSEPDEYDGGELVLHEPGSTQELKLPAGDMVLYPTTALHSVNEVTRGSRLASFFWTQSMIADEARRRIMFELDRTIMDLRTRLPDDDLAVLNLTNCYHNLMRQWCVL.

In terms of domain architecture, Fe2OG dioxygenase spans 78-178 (RVVPPLFNRY…RLASFFWTQS (101 aa)). Residues His-96, Asp-98, and His-159 each contribute to the Fe cation site. Arg-169 serves as a coordination point for 2-oxoglutarate.

Fe(2+) serves as cofactor. It depends on L-ascorbate as a cofactor.

In Gluconacetobacter diazotrophicus (strain ATCC 49037 / DSM 5601 / CCUG 37298 / CIP 103539 / LMG 7603 / PAl5), this protein is PKHD-type hydroxylase GDI1238/Gdia_1949.